Consider the following 446-residue polypeptide: tRNA-2-methylthio-N(6)-dimethylallyladenosine synthase (446 aa).

Positions 3 to 120 (KKLFIETHGC…LPEMIDAARS (118 aa)) constitute an MTTase N-terminal domain. Residues Cys-12, Cys-49, Cys-83, Cys-157, Cys-161, and Cys-164 each coordinate [4Fe-4S] cluster. One can recognise a Radical SAM core domain in the interval 143–375 (RVDGPTAFVS…QGRIHQQGYE (233 aa)). Residues 378–442 (RRMVGSTQRI…PHSLRGTLIE (65 aa)) form the TRAM domain.

Belongs to the methylthiotransferase family. MiaB subfamily. Monomer. [4Fe-4S] cluster is required as a cofactor.

The protein resides in the cytoplasm. It catalyses the reaction N(6)-dimethylallyladenosine(37) in tRNA + (sulfur carrier)-SH + AH2 + 2 S-adenosyl-L-methionine = 2-methylsulfanyl-N(6)-dimethylallyladenosine(37) in tRNA + (sulfur carrier)-H + 5'-deoxyadenosine + L-methionine + A + S-adenosyl-L-homocysteine + 2 H(+). Its function is as follows. Catalyzes the methylthiolation of N6-(dimethylallyl)adenosine (i(6)A), leading to the formation of 2-methylthio-N6-(dimethylallyl)adenosine (ms(2)i(6)A) at position 37 in tRNAs that read codons beginning with uridine. This chain is tRNA-2-methylthio-N(6)-dimethylallyladenosine synthase, found in Pseudomonas paraeruginosa (strain DSM 24068 / PA7) (Pseudomonas aeruginosa (strain PA7)).